A 288-amino-acid polypeptide reads, in one-letter code: Bifunctional protein FolD (288 aa).

NADP(+)-binding positions include 166–168 (GAS) and Ile-232.

The protein belongs to the tetrahydrofolate dehydrogenase/cyclohydrolase family. Homodimer.

The catalysed reaction is (6R)-5,10-methylene-5,6,7,8-tetrahydrofolate + NADP(+) = (6R)-5,10-methenyltetrahydrofolate + NADPH. The enzyme catalyses (6R)-5,10-methenyltetrahydrofolate + H2O = (6R)-10-formyltetrahydrofolate + H(+). The protein operates within one-carbon metabolism; tetrahydrofolate interconversion. Its function is as follows. Catalyzes the oxidation of 5,10-methylenetetrahydrofolate to 5,10-methenyltetrahydrofolate and then the hydrolysis of 5,10-methenyltetrahydrofolate to 10-formyltetrahydrofolate. In Salmonella arizonae (strain ATCC BAA-731 / CDC346-86 / RSK2980), this protein is Bifunctional protein FolD.